The following is a 175-amino-acid chain: O-acetyl-ADP-ribose deacetylase (175 aa).

Residues 1–175 (MAVQPEVILG…IYRRLLASYP (175 aa)) enclose the Macro domain. Substrate-binding positions include 11–12 (DI), Asn25, 33–35 (GVD), and 122–126 (STGVY). Asp35 functions as the Proton acceptor in the catalytic mechanism.

This sequence belongs to the MacroD-type family. YmdB subfamily. In terms of assembly, homodimer. Interacts with RNase III.

It carries out the reaction 3''-O-acetyl-ADP-D-ribose + H2O = ADP-D-ribose + acetate + H(+). The catalysed reaction is 2''-O-acetyl-ADP-D-ribose + H2O = ADP-D-ribose + acetate + H(+). Functionally, deacetylates O-acetyl-ADP ribose to yield ADP-ribose and free acetate. Down-regulates ribonuclease 3 (RNase III) activity. Acts by interacting directly with the region of the ribonuclease that is required for dimerization/activation. The chain is O-acetyl-ADP-ribose deacetylase from Klebsiella pneumoniae (strain 342).